A 220-amino-acid polypeptide reads, in one-letter code: Dual specificity phosphatase 29 (220 aa).

The segment covering 1–15 (MTSGEVKTSLKNAYS) has biased composition (polar residues). The disordered stretch occupies residues 1–29 (MTSGEVKTSLKNAYSSAKRLSPKMEEEGE). The region spanning 54–202 (HVNEVWPKLY…LRELDKQLVQ (149 aa)) is the Tyrosine-protein phosphatase domain. 146–153 (HCVMGRSR) serves as a coordination point for substrate. Cys147 acts as the Phosphocysteine intermediate in catalysis.

It belongs to the protein-tyrosine phosphatase family. Non-receptor class dual specificity subfamily. In terms of assembly, homodimer. Interacts with PRKAA2.

It localises to the cytoplasm. Its subcellular location is the nucleus. The enzyme catalyses O-phospho-L-tyrosyl-[protein] + H2O = L-tyrosyl-[protein] + phosphate. It catalyses the reaction O-phospho-L-seryl-[protein] + H2O = L-seryl-[protein] + phosphate. It carries out the reaction O-phospho-L-threonyl-[protein] + H2O = L-threonyl-[protein] + phosphate. Dual specificity phosphatase able to dephosphorylate phosphotyrosine, phosphoserine and phosphothreonine residues within the same substrate, with a preference for phosphotyrosine as a substrate. Involved in the modulation of intracellular signaling cascades. In skeletal muscle regulates systemic glucose homeostasis by activating, AMPK, an energy sensor protein kinase. Affects MAP kinase signaling though modulation of the MAPK1/2 cascade in skeletal muscle promoting muscle cell differentiation, development and atrophy. This chain is Dual specificity phosphatase 29, found in Homo sapiens (Human).